A 347-amino-acid chain; its full sequence is Adenine deaminase (347 aa).

Positions 16, 18, and 204 each coordinate Zn(2+). Catalysis depends on Glu207, which acts as the Proton donor. Position 285 (Asp285) interacts with Zn(2+). Asp286 contacts substrate.

Belongs to the metallo-dependent hydrolases superfamily. Adenosine and AMP deaminases family. Adenine deaminase type 2 subfamily. Requires Zn(2+) as cofactor. Probably ubiquitinated when cells enter quiescence in response to nutrient limitation, since it is specifically degraded via a process requiring the F-box protein SAF1 and components of the SKP1-Cullin-F-box complex.

Its subcellular location is the cytoplasm. It is found in the nucleus. The catalysed reaction is adenine + H2O + H(+) = hypoxanthine + NH4(+). In terms of biological role, catalyzes the hydrolytic deamination of adenine to hypoxanthine. Plays an important role in the purine salvage pathway and in nitrogen catabolism. Also exhibits a low activity towards N(6)-substituted adenines that are commonly known as the plant hormones cytokinins. The chain is Adenine deaminase from Saccharomyces cerevisiae (strain ATCC 204508 / S288c) (Baker's yeast).